Here is a 405-residue protein sequence, read N- to C-terminus: Glycosylated lysosomal membrane protein A (405 aa).

The signal sequence occupies residues 1-25 (MGCTRGWRLLLLLGLVCVGALQGRG). The Lumenal segment spans residues 26–365 (QEESREVSLQ…YGEPPRDSFS (340 aa)). N-linked (GlcNAc...) asparagine glycosylation is found at Asn55, Asn86, Asn125, Asn129, Asn143, Asn153, Asn157, Asn164, Asn169, Asn179, Asn206, Asn222, Asn267, Asn304, and Asn331. The chain crosses the membrane as a helical span at residues 366–386 (ILVICIMAVALGTPLLLLIVG). Residues 387–405 (TLVVTALRHKVYSNYEPIN) lie on the Cytoplasmic side of the membrane. The Lysosomal targeting motif motif lies at 401–405 (YEPIN).

This sequence belongs to the GLMP family. In terms of assembly, interacts (via lumenal domain) with lysosomal protein MFSD1; the interaction starts while both proteins are still in the endoplasmic reticulum and is required for stabilization of MFSD1 in lysosomes but has no direct effect on its targeting to lysosomes or transporter activity.

Its subcellular location is the lysosome membrane. Functionally, required to protect lysosomal transporter MFSD1 from lysosomal proteolysis and for MFSD1 lysosomal localization. In Xenopus laevis (African clawed frog), this protein is Glycosylated lysosomal membrane protein A (glmp-a).